A 301-amino-acid polypeptide reads, in one-letter code: GPN-loop GTPase 3 (301 aa).

Residue 13 to 18 (GAGKST) coordinates GTP. The Gly-Pro-Asn (GPN)-loop; involved in dimer interface signature appears at 70–72 (GPN). 176 to 179 (SKMD) lines the GTP pocket. The tract at residues 212–232 (IAEGQDAEDDESKAPDEKDQV) is disordered. Residues 223–232 (SKAPDEKDQV) are compositionally biased toward basic and acidic residues.

This sequence belongs to the GPN-loop GTPase family. Heterodimers with GPN1 or GPN2. Binds to RNA polymerase II (RNAPII).

Functionally, small GTPase required for proper nuclear import of RNA polymerase II and III (RNAPII and RNAPIII). May act at an RNAP assembly step prior to nuclear import. This is GPN-loop GTPase 3 from Gibberella zeae (strain ATCC MYA-4620 / CBS 123657 / FGSC 9075 / NRRL 31084 / PH-1) (Wheat head blight fungus).